Reading from the N-terminus, the 230-residue chain is Mitochondrial fission factor homolog B (230 aa).

At 1-210 (MSGAAFPSPT…ENKERAKREM (210 aa)) the chain is on the cytoplasmic side. The interval 117 to 153 (EQTSSVSHPSEEVRTQTKTRRERSVSENAGVHHNGPL) is disordered. S142 carries the post-translational modification Phosphoserine. Residues 179-210 (VDATSLRRQIVKLNRRLQLLEEENKERAKREM) adopt a coiled-coil conformation. The helical; Anchor for type IV membrane protein transmembrane segment at 211–228 (VMYSITVAFWLVNSWVWF) threads the bilayer. Residues 229 to 230 (RR) lie on the Extracellular side of the membrane.

It belongs to the Tango11 family.

The protein localises to the mitochondrion outer membrane. The protein resides in the peroxisome. In terms of biological role, plays a role in mitochondrial and peroxisomal fission. Promotes the recruitment and association of the fission mediator dynamin-related protein 1 (DNM1L) to the mitochondrial surface. This Danio rerio (Zebrafish) protein is Mitochondrial fission factor homolog B.